The sequence spans 150 residues: Protein Smg homolog (150 aa).

This sequence belongs to the Smg family.

The polypeptide is Protein Smg homolog (Methylibium petroleiphilum (strain ATCC BAA-1232 / LMG 22953 / PM1)).